A 523-amino-acid polypeptide reads, in one-letter code: Cryptochrome DASH (523 aa).

The 137-residue stretch at 6-142 (RVIICLLRND…KYQTFWGSTL (137 aa)) folds into the Photolyase/cryptochrome alpha/beta domain. 2 disordered regions span residues 174-211 (RPTF…TDPR) and 486-523 (KPAG…NKDV). Residues 496–510 (RRGKGPSHTPKQHKN) are compositionally biased toward basic residues.

It belongs to the DNA photolyase class-1 family. FAD serves as cofactor. (6R)-5,10-methylene-5,6,7,8-tetrahydrofolate is required as a cofactor.

Functionally, may have a photoreceptor function. Has weak cyclobutyl pyrimidine photolyase activity when expressed in E.coli and when tested in vitro. The sequence is that of Cryptochrome DASH (cry-dash) from Xenopus laevis (African clawed frog).